The following is a 99-amino-acid chain: Regulatory protein FanB (99 aa).

In terms of biological role, trans-acting protein involved in the regulation of the biogenesis of K99 fimbriae (FanC). This is Regulatory protein FanB (fanB) from Escherichia coli.